Consider the following 336-residue polypeptide: Protein RecA (336 aa).

Residue 66–73 (GNESSGKT) coordinates ATP.

Belongs to the RecA family.

Its subcellular location is the cytoplasm. Functionally, can catalyze the hydrolysis of ATP in the presence of single-stranded DNA, the ATP-dependent uptake of single-stranded DNA by duplex DNA, and the ATP-dependent hybridization of homologous single-stranded DNAs. It interacts with LexA causing its activation and leading to its autocatalytic cleavage. The chain is Protein RecA from Mycoplasma pneumoniae (strain ATCC 29342 / M129 / Subtype 1) (Mycoplasmoides pneumoniae).